The following is a 501-amino-acid chain: Sarpagan bridge enzyme (501 aa).

The helical; Signal-anchor for type II membrane protein transmembrane segment at 3 to 23 (VMQLSFSYPALFLFVFFLFML) threads the bilayer. Cysteine 441 contributes to the heme binding site.

Belongs to the cytochrome P450 family. Heme is required as a cofactor. As to expression, highly expressed in roots. Expressed at low levels in stems.

It is found in the endoplasmic reticulum membrane. The catalysed reaction is (19E)-geissoschizine + reduced [NADPH--hemoprotein reductase] + O2 = polyneuridine aldehyde + oxidized [NADPH--hemoprotein reductase] + 2 H2O + H(+). The enzyme catalyses tetrahydroalstonine + A + reduced [NADPH--hemoprotein reductase] + O2 = alstonine + AH2 + oxidized [NADPH--hemoprotein reductase] + 2 H2O + H(+). It carries out the reaction ajmalicine + A + reduced [NADPH--hemoprotein reductase] + O2 = serpentine + AH2 + oxidized [NADPH--hemoprotein reductase] + 2 H2O + H(+). It functions in the pathway alkaloid biosynthesis; ajmaline biosynthesis. In terms of biological role, monooxygenase involved in the biosynthesis of ajmaline-type monoterpenoid indole alkaloids (MIAs) natural products, important plant-derived pharmaceuticals used in the therapy of heart disorders. Converts by cyclization the strictosidine-derived geissoschizine to the sarpagan alkaloid polyneuridine aldehyde, precursor of vomilenine, an intermediate chemical in the biosynthesis of ajmaline. Converts by aromatization the tetrahydro-beta-carboline alkaloids tetrahydroalstonine and ajmalicine to the corresponding beta-carboline alkaloids alstonine and serpentine, respectively. The polypeptide is Sarpagan bridge enzyme (Gelsemium sempervirens (Carolina jasmine)).